A 213-amino-acid chain; its full sequence is NADH dehydrogenase [ubiquinone] iron-sulfur protein 7, mitochondrial (213 aa).

Residues 1-37 constitute a mitochondrion transit peptide; the sequence is MAVLSAPGLRGFRILGLRSSVGPAVQARSVHQSVATD. Residues 30–44 show a composition bias toward polar residues; the sequence is VHQSVATDGPSSTQP. The segment at 30–53 is disordered; sequence VHQSVATDGPSSTQPALPKARAVA. Positions 88 and 89 each coordinate [4Fe-4S] cluster. Arg111 is modified (hydroxyarginine). Positions 153 and 183 each coordinate [4Fe-4S] cluster.

Belongs to the complex I 20 kDa subunit family. Core subunit of respiratory chain NADH dehydrogenase (Complex I) which is composed of 45 different subunits. This is a component of the iron-sulfur (IP) fragment of the enzyme. [4Fe-4S] cluster serves as cofactor. Hydroxylated ar Arg-111 by NDUFAF5 early in the pathway of assembly of complex I, before the formation of the juncture between peripheral and membrane arms.

It localises to the mitochondrion inner membrane. The enzyme catalyses a ubiquinone + NADH + 5 H(+)(in) = a ubiquinol + NAD(+) + 4 H(+)(out). Core subunit of the mitochondrial membrane respiratory chain NADH dehydrogenase (Complex I) which catalyzes electron transfer from NADH through the respiratory chain, using ubiquinone as an electron acceptor. Essential for the catalytic activity of complex I. The sequence is that of NADH dehydrogenase [ubiquinone] iron-sulfur protein 7, mitochondrial (NDUFS7) from Pan troglodytes (Chimpanzee).